The sequence spans 65 residues: Defensin-B3 (65 aa).

The signal sequence occupies residues 1 to 21 (MRLLLVFFFLSLLDQAPPARS). Cystine bridges form between Cys29–Cys58, Cys36–Cys50, and Cys40–Cys59. Positions 62–65 (ESPR) are excised as a propeptide.

The protein belongs to the beta-defensin family. In terms of tissue distribution, lowly expressed in spleen, and expressed at lower levels in kidney, lung and testis.

The protein localises to the secreted. In terms of biological role, has antimicrobial activity. The sequence is that of Defensin-B3 from Ornithorhynchus anatinus (Duckbill platypus).